We begin with the raw amino-acid sequence, 645 residues long: 1,4-alpha-glucan branching enzyme GlgB (645 aa).

The Nucleophile role is filled by D309. Residue E352 is the Proton donor of the active site. The tract at residues 619 to 645 (VKTRKGSKKQDGSKTKVRSNVTSRGKR) is disordered. A compositionally biased stretch (polar residues) spans 636-645 (RSNVTSRGKR).

It belongs to the glycosyl hydrolase 13 family. GlgB subfamily. Monomer.

It carries out the reaction Transfers a segment of a (1-&gt;4)-alpha-D-glucan chain to a primary hydroxy group in a similar glucan chain.. Its pathway is glycan biosynthesis; glycogen biosynthesis. Catalyzes the formation of the alpha-1,6-glucosidic linkages in glycogen by scission of a 1,4-alpha-linked oligosaccharide from growing alpha-1,4-glucan chains and the subsequent attachment of the oligosaccharide to the alpha-1,6 position. The chain is 1,4-alpha-glucan branching enzyme GlgB from Bacillus cereus (strain ATCC 14579 / DSM 31 / CCUG 7414 / JCM 2152 / NBRC 15305 / NCIMB 9373 / NCTC 2599 / NRRL B-3711).